Consider the following 207-residue polypeptide: Protein-L-isoaspartate O-methyltransferase (207 aa).

The active site involves Ser-56.

This sequence belongs to the methyltransferase superfamily. L-isoaspartyl/D-aspartyl protein methyltransferase family.

It is found in the cytoplasm. The catalysed reaction is [protein]-L-isoaspartate + S-adenosyl-L-methionine = [protein]-L-isoaspartate alpha-methyl ester + S-adenosyl-L-homocysteine. Its function is as follows. Catalyzes the methyl esterification of L-isoaspartyl residues in peptides and proteins that result from spontaneous decomposition of normal L-aspartyl and L-asparaginyl residues. It plays a role in the repair and/or degradation of damaged proteins. The chain is Protein-L-isoaspartate O-methyltransferase from Pyrobaculum islandicum (strain DSM 4184 / JCM 9189 / GEO3).